The chain runs to 359 residues: Epoxide hydrolase 4 (359 aa).

Residues 15 to 35 form a helical; Signal-anchor for type II membrane protein membrane-spanning segment; sequence ALLYWSLVYGYCGLCASVHLL. Residues 92–337 enclose the AB hydrolase-1 domain; sequence PLMLLLHGFP…ILSEGSHWLQ (246 aa). The active-site Nucleophile is the D167. Y279 functions as the Proton donor in the catalytic mechanism. H334 serves as the catalytic Proton acceptor.

This sequence belongs to the AB hydrolase superfamily. Epoxide hydrolase family.

Its subcellular location is the membrane. This chain is Epoxide hydrolase 4 (Ephx4), found in Mus musculus (Mouse).